Here is a 175-residue protein sequence, read N- to C-terminus: Pre-mRNA-splicing factor SNT309 (175 aa).

As to quaternary structure, belongs to the NTC complex (or PRP19-associated complex), composed of at least CEF1, CLF1, ISY1, NTC20, SNT309, SYF1, SYF2, and PRP19. The NTC complex associates with the spliceosome after the release of the U1 and U4 snRNAs and forms the CWC spliceosome subcomplex (or CEF1-associated complex) reminiscent of a late-stage spliceosome composed also of the U2, U5 and U6 snRNAs and at least BUD13, BUD31, BRR2, CDC40, CUS1, CWC2, CWC15, CWC21, CWC22, CWC23, CWC24, CWC25, CWC27, ECM2, HSH155, IST3, LEA1, MSL1, PRP8, PRP9, PRP11, PRP21, PRP22, PRP45, PRP46, SLU7, SMB1, SMD1, SMD2, SMD3, SMX2, SMX3, SNU114, SPP2, RSE1 and YJU2. Interacts with PRP19.

It localises to the nucleus. In terms of biological role, involved in pre-mRNA splicing by stabilizing the NTC (or PRP19-associated complex). As a component of the NTC complex, associates to the spliceosome to mediate conformational rearrangement or to stabilize the structure of the spliceosome after U4 snRNA dissociation, which leads to spliceosome maturation. This is Pre-mRNA-splicing factor SNT309 (SNT309) from Saccharomyces cerevisiae (strain ATCC 204508 / S288c) (Baker's yeast).